Here is a 2531-residue protein sequence, read N- to C-terminus: Neurogenic locus notch homolog protein 1 (2531 aa).

A signal peptide spans 1 to 18 (MPRLLTPLLCLTLLPALA). Over 19–1725 (ARGLRCSQPS…VEPPLPSQLH (1707 aa)) the chain is Extracellular. EGF-like domains lie at 20 to 58 (RGLR…QRCQ), 59 to 99 (DSNP…PLCL), 102 to 139 (LDNA…KSCQ), and 140 to 176 (QADP…PTCR). 32 disulfides stabilise this stretch: cysteine 24/cysteine 37, cysteine 31/cysteine 46, cysteine 63/cysteine 74, cysteine 68/cysteine 87, cysteine 89/cysteine 98, cysteine 106/cysteine 117, cysteine 111/cysteine 127, cysteine 129/cysteine 138, cysteine 144/cysteine 155, cysteine 149/cysteine 164, cysteine 166/cysteine 175, cysteine 182/cysteine 195, cysteine 189/cysteine 204, cysteine 206/cysteine 215, cysteine 222/cysteine 233, cysteine 227/cysteine 243, cysteine 245/cysteine 254, cysteine 261/cysteine 272, cysteine 266/cysteine 281, cysteine 283/cysteine 292, cysteine 299/cysteine 312, cysteine 306/cysteine 321, cysteine 323/cysteine 332, cysteine 339/cysteine 350, cysteine 344/cysteine 359, cysteine 361/cysteine 370, cysteine 376/cysteine 387, cysteine 381/cysteine 398, cysteine 400/cysteine 409, cysteine 416/cysteine 429, cysteine 423/cysteine 438, and cysteine 440/cysteine 449. Serine 65 carries O-linked (Glc...) serine glycosylation. Residue threonine 73 is glycosylated (O-linked (Fuc...) threonine). O-linked (Fuc...) threonine glycosylation occurs at threonine 116. O-linked (Glc...) serine glycosylation is present at serine 146. Residues 178 to 216 (DVNECSQNPGLCRHGGTCHNEIGSYRCACRATHTGPHCE) enclose the EGF-like 5; calcium-binding domain. Threonine 194 carries O-linked (Fuc...) threonine glycosylation. The 38-residue stretch at 218–255 (PYVPCSPSPCQNGGTCRPTGDTTHECACLPGFAGQNCE) folds into the EGF-like 6 domain. An O-linked (Fuc...) threonine; alternate glycan is attached at threonine 232. Threonine 232 carries O-linked (GalNAc...) threonine; alternate glycosylation. The 37-residue stretch at 257–293 (NVDDCPGNNCKNGGACVDGVNTYNCRCPPEWTGQYCT) folds into the EGF-like 7; calcium-binding domain. Positions 295–333 (DVDECQLMPNACQNGGTCHNTHGGYNCVCVNGWTGEDCS) constitute an EGF-like 8; calcium-binding domain. O-linked (Fuc...) threonine glycosylation is present at threonine 311. The 37-residue stretch at 335–371 (NIDDCASAACFQGATCHDRVASFYCECPHGRTGLLCH) folds into the EGF-like 9; calcium-binding domain. Serine 341 carries an O-linked (Glc...) serine glycan. Threonine 349 is a glycosylation site (O-linked (Fuc...) threonine). The EGF-like 10; calcium-binding domain maps to 372–410 (LNDACISNPCNEGSNCDTNPVNGKAICTCPSGYTGPACS). An O-linked (Glc...) serine glycan is attached at serine 378. Residues 412–450 (DVDECALGANPCEHAGKCLNTLGSFECQCLQGYTGPRCE) form the EGF-like 11; calcium-binding domain. The tract at residues 420–421 (AN) is interaction with DLL4. Threonine 432 and serine 435 together coordinate Ca(2+). Serine 435 is a glycosylation site (O-linked (Glc...) serine). Residues 448–452 (RCEID) are interaction with DLL4. Residues aspartate 452, valine 453, and glutamate 455 each coordinate Ca(2+). Residues 452–488 (DVNECISNPCQNDATCLDQIGEFQCICMPGYEGVYCE) enclose the EGF-like 12; calcium-binding domain. 3 disulfides stabilise this stretch: cysteine 456-cysteine 467, cysteine 461-cysteine 476, and cysteine 478-cysteine 487. Serine 458 carries O-linked (Glc...) serine glycosylation. Residue threonine 466 is glycosylated (O-linked (Fuc...) threonine). 2 residues coordinate Ca(2+): aspartate 469 and glutamine 470. 3 residues coordinate Ca(2+): asparagine 490, threonine 491, and glutamate 493. Residues 490 to 526 (NTDECASSPCLHNGHCMDKINEFQCQCPKGFNGHLCQ) form the EGF-like 13; calcium-binding domain. 75 disulfides stabilise this stretch: cysteine 494–cysteine 505, cysteine 499–cysteine 514, cysteine 516–cysteine 525, cysteine 532–cysteine 543, cysteine 537–cysteine 552, cysteine 554–cysteine 563, cysteine 570–cysteine 580, cysteine 575–cysteine 589, cysteine 591–cysteine 600, cysteine 607–cysteine 618, cysteine 612–cysteine 627, cysteine 629–cysteine 638, cysteine 645–cysteine 655, cysteine 650–cysteine 664, cysteine 666–cysteine 675, cysteine 682–cysteine 693, cysteine 687–cysteine 702, cysteine 704–cysteine 713, cysteine 720–cysteine 730, cysteine 725–cysteine 739, cysteine 741–cysteine 750, cysteine 757–cysteine 768, cysteine 762–cysteine 777, cysteine 779–cysteine 788, cysteine 795–cysteine 806, cysteine 800–cysteine 815, cysteine 817–cysteine 826, cysteine 833–cysteine 844, cysteine 838–cysteine 855, cysteine 857–cysteine 866, cysteine 873–cysteine 884, cysteine 878–cysteine 893, cysteine 895–cysteine 904, cysteine 911–cysteine 922, cysteine 916–cysteine 931, cysteine 933–cysteine 942, cysteine 949–cysteine 960, cysteine 954–cysteine 969, cysteine 971–cysteine 980, cysteine 987–cysteine 998, cysteine 992–cysteine 1007, cysteine 1009–cysteine 1018, cysteine 1025–cysteine 1036, cysteine 1030–cysteine 1045, cysteine 1047–cysteine 1056, cysteine 1063–cysteine 1074, cysteine 1068–cysteine 1083, cysteine 1085–cysteine 1094, cysteine 1101–cysteine 1122, cysteine 1116–cysteine 1131, cysteine 1133–cysteine 1142, cysteine 1149–cysteine 1160, cysteine 1154–cysteine 1169, cysteine 1171–cysteine 1180, cysteine 1187–cysteine 1198, cysteine 1192–cysteine 1207, cysteine 1209–cysteine 1218, cysteine 1225–cysteine 1244, cysteine 1238–cysteine 1253, cysteine 1255–cysteine 1264, cysteine 1271–cysteine 1284, cysteine 1276–cysteine 1293, cysteine 1295–cysteine 1304, cysteine 1311–cysteine 1322, cysteine 1316–cysteine 1334, cysteine 1336–cysteine 1345, cysteine 1352–cysteine 1363, cysteine 1357–cysteine 1372, cysteine 1374–cysteine 1383, cysteine 1391–cysteine 1403, cysteine 1397–cysteine 1414, cysteine 1416–cysteine 1425, cysteine 1449–cysteine 1472, cysteine 1454–cysteine 1467, and cysteine 1463–cysteine 1479. Residue serine 496 is glycosylated (O-linked (Glc...) serine). Positions 507 and 508 each coordinate Ca(2+). The 37-residue stretch at 528 to 564 (DVDECASTPCKNGAKCLDGPNTYTCVCTEGYTGTHCE) folds into the EGF-like 14; calcium-binding domain. Serine 534 carries O-linked (Glc...) serine glycosylation. The EGF-like 15; calcium-binding domain maps to 566–601 (DIDECDPDPCHYGSCKDGVATFTCLCQPGYTGHHCE). The region spanning 603–639 (NINECHSQPCRHGGTCQDRDNSYLCLCLKGTTGPNCE) is the EGF-like 16; calcium-binding domain. Serine 609 carries an O-linked (Glc...) serine glycan. A glycan (O-linked (Fuc...) threonine) is linked at threonine 617. Residues 641–676 (NLDDCASNPCDSGTCLDKIDGYECACEPGYTGSMCN) form the EGF-like 17; calcium-binding domain. Serine 647 carries an O-linked (Glc...) serine glycan. An EGF-like 18; calcium-binding domain is found at 678–714 (NIDECAGSPCHNGGTCEDGIAGFTCRCPEGYHDPTCL). O-linked (Fuc...) threonine glycosylation is present at threonine 692. The EGF-like 19; calcium-binding domain maps to 716–751 (EVNECNSNPCIHGACRDGLNGYKCDCAPGWSGTNCD). The O-linked (Glc...) serine glycan is linked to serine 722. One can recognise an EGF-like 20; calcium-binding domain in the interval 753 to 789 (NNNECESNPCVNGGTCKDMTSGYVCTCREGFSGPNCQ). O-linked (Glc...) serine glycosylation is present at serine 759. O-linked (Fuc...) threonine glycosylation occurs at threonine 767. Serine 784 carries O-linked (GlcNAc) serine glycosylation. Positions 791-827 (NINECASNPCLNQGTCIDDVAGYKCNCPLPYTGATCE) constitute an EGF-like 21; calcium-binding domain. The O-linked (Glc...) serine glycan is linked to serine 797. The O-linked (Fuc...) threonine glycan is linked to threonine 805. The region spanning 829–867 (VLAPCATSPCKNSGVCKESEDYESFSCVCPTGWQGQTCE) is the EGF-like 22 domain. One can recognise an EGF-like 23; calcium-binding domain in the interval 869–905 (DINECVKSPCRHGASCQNTNGSYRCLCQAGYTGRNCE). N-linked (GlcNAc...) asparagine glycosylation is present at asparagine 888. Threonine 900 is a glycosylation site (O-linked (GlcNAc) threonine). The region spanning 907 to 943 (DIDDCRPNPCHNGGSCTDGINTAFCDCLPGFQGAFCE) is the EGF-like 24 domain. Serine 921 carries O-linked (Fuc) serine glycosylation. The region spanning 945–981 (DINECASNPCQNGANCTDCVDSYTCTCPVGFNGIHCE) is the EGF-like 25; calcium-binding domain. Residue serine 951 is glycosylated (O-linked (Glc...) serine). N-linked (GlcNAc...) asparagine glycosylation is present at asparagine 959. The EGF-like 26 domain maps to 983–1019 (NTPDCTESSCFNGGTCVDGINSFTCLCPPGFTGSYCQ). An O-linked (Fuc...) threonine glycan is attached at threonine 997. Residues 1021-1057 (DVNECDSRPCLHGGTCQDSYGTYKCTCPQGYTGLNCQ) enclose the EGF-like 27; calcium-binding domain. Serine 1027 carries an O-linked (Glc...) serine glycan. A glycan (O-linked (Fuc...) threonine) is linked at threonine 1035. EGF-like domains follow at residues 1059–1095 (LVRW…VNCD) and 1097–1143 (LSVS…SYCE). O-linked (Glc...) serine glycosylation occurs at serine 1065. An EGF-like 30; calcium-binding domain is found at 1145–1181 (EVDECSPNPCQNGATCTDYLGGFSCKCVAGYHGSNCS). O-linked (Fuc...) threonine glycosylation is present at threonine 1159. Asparagine 1179 carries an N-linked (GlcNAc...) asparagine glycan. The region spanning 1183-1219 (EINECLSQPCQNGGTCIDLTNSYKCSCPRGTQGVHCE) is the EGF-like 31; calcium-binding domain. Serine 1189 carries O-linked (Glc...) serine glycosylation. The O-linked (Fuc...) threonine glycan is linked to threonine 1197. An EGF-like 32; calcium-binding domain is found at 1221 to 1265 (NVDDCHPPLDPASRSPKCFNNGTCVDQVGGYTCTCPPGFVGERCE). Residue asparagine 1241 is glycosylated (N-linked (GlcNAc...) asparagine). 4 EGF-like domains span residues 1267-1305 (DVNE…RRCE), 1307-1346 (VING…ATCE), 1348-1384 (DART…PECQ), and 1387-1426 (ASSP…LLCH). The O-linked (Glc...) serine glycan is linked to serine 1273. An O-linked (Fuc...) threonine glycan is attached at threonine 1362. Residue threonine 1379 is glycosylated (O-linked (GlcNAc...) threonine). A glycan (O-linked (Fuc...) threonine; alternate) is linked at threonine 1402. The O-linked (GalNAc...) threonine; alternate glycan is linked to threonine 1402. LNR repeat units lie at residues 1449 to 1489 (CELP…PWKN), 1490 to 1531 (CTQS…CNPL), and 1532 to 1571 (YDQY…RLAA). Ca(2+) is bound by residues aspartate 1457, asparagine 1460, aspartate 1475, and aspartate 1478. Asparagine 1489 carries N-linked (GlcNAc...) asparagine glycosylation. Intrachain disulfides connect cysteine 1490-cysteine 1514, cysteine 1496-cysteine 1509, cysteine 1505-cysteine 1521, cysteine 1536-cysteine 1549, and cysteine 1545-cysteine 1561. N-linked (GlcNAc...) asparagine glycosylation occurs at asparagine 1587. Residues 1718–1750 (PPLPSQLHLMYVAAAAFVLLFFVGCGVLLSRKR) form an interaction with PSEN1 region. The chain crosses the membrane as a helical span at residues 1726-1746 (LMYVAAAAFVLLFFVGCGVLL). Residues 1747–2531 (SRKRRRQHGQ…QITHIPEAFK (785 aa)) lie on the Cytoplasmic side of the membrane. Residue lysine 1749 forms a Glycyl lysine isopeptide (Lys-Gly) (interchain with G-Cter in ubiquitin) linkage. Positions 1770–1798 (KKKRREPLGEDSVGLKPLKNASDGALMDD) are disordered. Residue threonine 1851 is modified to Phosphothreonine. ANK repeat units follow at residues 1917-1946 (TGET…DANI), 1950-1980 (MGRT…DLDA), 1984-2013 (DGTT…DVNA), 2017-2046 (LGKS…NKDM), and 2050-2079 (KEET…NRDI). Residues 1937 to 1945 (LLEASADAN) are HIF1AN-binding. At asparagine 1945 the chain carries (3S)-3-hydroxyasparagine; by HIF1AN; partial. Residues 2004 to 2012 (LINSHADVN) form an HIF1AN-binding region. Asparagine 2012 is modified ((3S)-3-hydroxyasparagine; by HIF1AN; partial). Disordered stretches follow at residues 2140–2185 (KSAT…DSSS), 2382–2428 (QPQN…SLPV), and 2440–2531 (PTSL…EAFK). Residues 2382–2395 (QPQNLQPPSQPHLS) are compositionally biased toward low complexity. The span at 2440 to 2478 (PTSLPSSMVPPMTTTQFLTPPSQHSYSSSPVDNTPSHQL) shows a compositional bias: polar residues. Residues 2488 to 2503 (PSPESPDQWSSSSPHS) are compositionally biased toward low complexity. Polar residues predominate over residues 2504–2524 (NISDWSEGISSPPTTMPSQIT).

Belongs to the NOTCH family. As to quaternary structure, heterodimer of a C-terminal fragment N(TM) and an N-terminal fragment N(EC) which are probably linked by disulfide bonds. Interacts with DNER, DTX1, DTX2 and RBPJ/RBPSUH. Also interacts with MAML1, MAML2 and MAML3 which act as transcriptional coactivators for NOTCH1. Notch 1 intracellular domain interacts with SNW1; the interaction involves multimerized NOTCH1 NICD and is implicated in a formation of an intermediate preactivation complex which associates with DNA-bound CBF-1/RBPJ. The activated membrane-bound form interacts with AAK1 which promotes NOTCH1 stabilization. Forms a trimeric complex with FBXW7 and SGK1. Interacts with HIF1AN. HIF1AN negatively regulates the function of notch intracellular domain (NICD), accelerating myogenic differentiation. Interacts (via NICD) with SNAI1 (via zinc fingers); the interaction induces SNAI1 degradation via MDM2-mediated ubiquitination and inhibits SNAI1-induced cell invasion. Interacts (via NICD) with MDM2A. Interacts (via NICD) with BCL6; the interaction decreases MAML1 recruitment by NOTCH1 NICD on target genes DNA and inhibits NOTCH1 transactivation activity. Interacts with THBS4. Interacts (via the EGF-like repeat region) with CCN3 (via CTCK domain). Interacts (via EGF-like domains) with DLL4 (via N-terminal DSL and MNNL domains). Interacts with ZMIZ1. Interacts (via NICD domain) with MEGF10 (via the cytoplasmic domain). Interacts with DLL1 and JAG1. Interacts (via NICD domain) with PRAG1. Forms a complex with PRAG1, N1ICD and MAML1, in a MAML1-dependent manner. Interacts (via transmembrane region) with PSEN1; the interaction is direct. Interacts with ZFP64. Post-translationally, synthesized in the endoplasmic reticulum as an inactive form which is proteolytically cleaved by a furin-like convertase in the trans-Golgi network before it reaches the plasma membrane to yield an active, ligand-accessible form. Cleavage results in a C-terminal fragment N(TM) and a N-terminal fragment N(EC). Following ligand binding, it is cleaved by ADAM17 to yield a membrane-associated intermediate fragment called notch extracellular truncation (NEXT). Following endocytosis, this fragment is then cleaved by one of the catalytic subunits of gamma-secretase (PSEN1 or PSEN2) to release a Notch-derived peptide containing the intracellular domain (NICD) from the membrane. Phosphorylated. In terms of processing, O-linked glycosylation by GALNT11 is involved in determination of left/right symmetry: glycosylation promotes activation of NOTCH1, possibly by promoting cleavage by ADAM17, modulating the balance between motile and immotile (sensory) cilia at the left-right organiser (LRO). O-glycosylated on the EGF-like domains. O-glucosylated at Ser-435 by KDELC1 and KDELC2. Contains both O-linked fucose and O-linked glucose in the EGF-like domains 11, 12 and 13, which are interacting with the residues on DLL4. O-glycosylation at Ser-1027 is only partial. MFNG-, RFNG- and LFNG-mediated modification of O-fucose residues at specific EGF-like domains results in inhibition of its activation by JAG1 and enhancement of its activation by DLL1 via an increased binding to DLL1. Post-translationally, ubiquitinated. Undergoes 'Lys-29'-linked polyubiquitination by ITCH; promotes the lysosomal degradation of non-activated internalized NOTCH1. Deubiquitination by USP12 is required for transport of internalized non-activated receptor from late endosomes to lysosomes for degradation. Monoubiquitination at Lys-1749 is required for activation by gamma-secretase cleavage, it promotes interaction with AAK1, which stabilizes it. Deubiquitination by EIF3F is necessary for nuclear import of activated Notch. Hydroxylated at Asn-1945 and Asn-2012 by HIF1AN. Hydroxylation reduces affinity for HI1AN and may thus indirectly modulate negative regulation of NICD. In terms of tissue distribution, highly expressed in the brain, lung and thymus. Expressed at lower levels in the spleen, bone-marrow, spinal cord, eyes, mammary gland, liver, intestine, skeletal muscle, kidney and heart. In the hair follicle, highly expressed exclusively in the epithelial compartment.

Its subcellular location is the cell membrane. It localises to the late endosome membrane. The protein localises to the nucleus. Functions as a receptor for membrane-bound ligands Jagged-1 (JAG1), Jagged-2 (JAG2) and Delta-1 (DLL1) to regulate cell-fate determination. Upon ligand activation through the released notch intracellular domain (NICD) it forms a transcriptional activator complex with RBPJ/RBPSUH and activates genes of the enhancer of split locus. Affects the implementation of differentiation, proliferation and apoptotic programs. Involved in angiogenesis; negatively regulates endothelial cell proliferation and migration and angiogenic sprouting. Involved in the maturation of both CD4(+) and CD8(+) cells in the thymus. Important for follicular differentiation and possibly cell fate selection within the follicle. During cerebellar development, functions as a receptor for neuronal DNER and is involved in the differentiation of Bergmann glia. Represses neuronal and myogenic differentiation. May play an essential role in postimplantation development, probably in some aspect of cell specification and/or differentiation. May be involved in mesoderm development, somite formation and neurogenesis. May enhance HIF1A function by sequestering HIF1AN away from HIF1A. Required for the THBS4 function in regulating protective astrogenesis from the subventricular zone (SVZ) niche after injury. Involved in determination of left/right symmetry by modulating the balance between motile and immotile (sensory) cilia at the left-right organiser (LRO). This Mus musculus (Mouse) protein is Neurogenic locus notch homolog protein 1 (Notch1).